The sequence spans 156 residues: 6,7-dimethyl-8-ribityllumazine synthase (156 aa).

5-amino-6-(D-ribitylamino)uracil contacts are provided by residues F22, 56-58 (ALE), and 80-82 (AVI). (2S)-2-hydroxy-3-oxobutyl phosphate is bound at residue 85-86 (DT). Residue H88 is the Proton donor of the active site. F113 contributes to the 5-amino-6-(D-ribitylamino)uracil binding site. R127 provides a ligand contact to (2S)-2-hydroxy-3-oxobutyl phosphate.

It belongs to the DMRL synthase family.

The enzyme catalyses (2S)-2-hydroxy-3-oxobutyl phosphate + 5-amino-6-(D-ribitylamino)uracil = 6,7-dimethyl-8-(1-D-ribityl)lumazine + phosphate + 2 H2O + H(+). Its pathway is cofactor biosynthesis; riboflavin biosynthesis; riboflavin from 2-hydroxy-3-oxobutyl phosphate and 5-amino-6-(D-ribitylamino)uracil: step 1/2. Catalyzes the formation of 6,7-dimethyl-8-ribityllumazine by condensation of 5-amino-6-(D-ribitylamino)uracil with 3,4-dihydroxy-2-butanone 4-phosphate. This is the penultimate step in the biosynthesis of riboflavin. The chain is 6,7-dimethyl-8-ribityllumazine synthase from Leuconostoc mesenteroides subsp. mesenteroides (strain ATCC 8293 / DSM 20343 / BCRC 11652 / CCM 1803 / JCM 6124 / NCDO 523 / NBRC 100496 / NCIMB 8023 / NCTC 12954 / NRRL B-1118 / 37Y).